The primary structure comprises 249 residues: uncharacterized protein (249 aa).

Positions 1 to 20 are cleaved as a signal peptide; the sequence is MSNQNKVLSLGLLLLAAVAA.

Belongs to the IIV-6 117L family.

This is an uncharacterized protein from Acheta domesticus (House cricket).